We begin with the raw amino-acid sequence, 217 residues long: Thiamine-phosphate synthase (217 aa).

4-amino-2-methyl-5-(diphosphooxymethyl)pyrimidine-binding positions include 42 to 46 (QYRDK) and aspartate 77. Aspartate 78 and aspartate 97 together coordinate Mg(2+). Serine 116 serves as a coordination point for 4-amino-2-methyl-5-(diphosphooxymethyl)pyrimidine. 143–145 (TTS) is a 2-[(2R,5Z)-2-carboxy-4-methylthiazol-5(2H)-ylidene]ethyl phosphate binding site. Lysine 146 provides a ligand contact to 4-amino-2-methyl-5-(diphosphooxymethyl)pyrimidine. Residues glycine 174 and 194-195 (IS) each bind 2-[(2R,5Z)-2-carboxy-4-methylthiazol-5(2H)-ylidene]ethyl phosphate.

It belongs to the thiamine-phosphate synthase family. Mg(2+) serves as cofactor.

The enzyme catalyses 2-[(2R,5Z)-2-carboxy-4-methylthiazol-5(2H)-ylidene]ethyl phosphate + 4-amino-2-methyl-5-(diphosphooxymethyl)pyrimidine + 2 H(+) = thiamine phosphate + CO2 + diphosphate. The catalysed reaction is 2-(2-carboxy-4-methylthiazol-5-yl)ethyl phosphate + 4-amino-2-methyl-5-(diphosphooxymethyl)pyrimidine + 2 H(+) = thiamine phosphate + CO2 + diphosphate. It carries out the reaction 4-methyl-5-(2-phosphooxyethyl)-thiazole + 4-amino-2-methyl-5-(diphosphooxymethyl)pyrimidine + H(+) = thiamine phosphate + diphosphate. Its pathway is cofactor biosynthesis; thiamine diphosphate biosynthesis; thiamine phosphate from 4-amino-2-methyl-5-diphosphomethylpyrimidine and 4-methyl-5-(2-phosphoethyl)-thiazole: step 1/1. In terms of biological role, condenses 4-methyl-5-(beta-hydroxyethyl)thiazole monophosphate (THZ-P) and 2-methyl-4-amino-5-hydroxymethyl pyrimidine pyrophosphate (HMP-PP) to form thiamine monophosphate (TMP). This Lactiplantibacillus plantarum (strain ATCC BAA-793 / NCIMB 8826 / WCFS1) (Lactobacillus plantarum) protein is Thiamine-phosphate synthase.